We begin with the raw amino-acid sequence, 433 residues long: Pyrimidine-nucleoside phosphorylase (433 aa).

Residue 81–83 (KHS) participates in phosphate binding. Glycine 88 and threonine 90 together coordinate K(+). Phosphate-binding positions include threonine 92, 108–110 (KMS), and threonine 120. 2 residues coordinate substrate: arginine 168 and lysine 187. The K(+) site is built by leucine 243, alanine 246, and glutamate 255.

Belongs to the thymidine/pyrimidine-nucleoside phosphorylase family. In terms of assembly, homodimer. K(+) serves as cofactor.

It catalyses the reaction uridine + phosphate = alpha-D-ribose 1-phosphate + uracil. The catalysed reaction is thymidine + phosphate = 2-deoxy-alpha-D-ribose 1-phosphate + thymine. The enzyme catalyses 2'-deoxyuridine + phosphate = 2-deoxy-alpha-D-ribose 1-phosphate + uracil. In terms of biological role, catalyzes phosphorolysis of the pyrimidine nucleosides uridine, thymidine and 2'-deoxyuridine with the formation of the corresponding pyrimidine base and ribose-1-phosphate. In Staphylococcus aureus (strain MSSA476), this protein is Pyrimidine-nucleoside phosphorylase (pdp).